The sequence spans 431 residues: Protein cereblon (431 aa).

Residues 1–36 (MGNQLQLLPENEEEEEDDMETEDRDGEDVEKPSIIN) are disordered. Residues 10-28 (ENEEEEEDDMETEDRDGED) show a composition bias toward acidic residues. One can recognise a Lon N-terminal domain in the interval 69–309 (LPVLPHVALI…CELDIMDRCT (241 aa)). One can recognise a CULT domain in the interval 308 to 416 (CTSLCCKQCQ…LTRSALLPTI (109 aa)). Cys313 and Cys316 together coordinate Zn(2+). (S)-thalidomide-binding residues include His368, Trp370, and Trp376. Cys381 and Cys384 together coordinate Zn(2+).

It belongs to the CRBN family. As to quaternary structure, component of a DCX (DDB1-CUL4-X-box) protein ligase complex. As to expression, highly expressed in brain, head, vasculature otic vesicles and developing pectoral fins.

It is found in the cytoplasm. Its subcellular location is the nucleus. Its pathway is protein modification; protein ubiquitination. Functionally, substrate recognition component of a DCX (DDB1-CUL4-X-box) E3 protein ligase complex that mediates the ubiquitination and subsequent proteasomal degradation of target proteins, such as MEIS2. Normal degradation of key regulatory proteins is required for normal limb outgrowth and expression of the fibroblast growth factor FGF8. Maintains presynaptic glutamate release and consequently cognitive functions, such as memory and learning, by negatively regulating large-conductance calcium-activated potassium (BK) channels in excitatory neurons. Likely to function by regulating the assembly and neuronal surface expression of BK channels via its interaction with KCNT1. May also be involved in regulating anxiety-like behaviors via a BK channel-independent mechanism. This chain is Protein cereblon (crbn), found in Danio rerio (Zebrafish).